The following is a 404-amino-acid chain: Serine/threonine transporter SstT (404 aa).

Transmembrane regions (helical) follow at residues Ile17 to Ile37, Phe44 to Ile64, Ile75 to Ile95, Ala138 to Leu158, Ile179 to Val199, Leu212 to Leu232, Ile287 to Leu307, Phe319 to Val339, and Phe354 to Ile374.

The protein belongs to the dicarboxylate/amino acid:cation symporter (DAACS) (TC 2.A.23) family.

The protein resides in the cell membrane. The catalysed reaction is L-serine(in) + Na(+)(in) = L-serine(out) + Na(+)(out). It catalyses the reaction L-threonine(in) + Na(+)(in) = L-threonine(out) + Na(+)(out). Its function is as follows. Involved in the import of serine and threonine into the cell, with the concomitant import of sodium (symport system). This Streptococcus equi subsp. zooepidemicus (strain MGCS10565) protein is Serine/threonine transporter SstT.